Consider the following 357-residue polypeptide: Uroporphyrinogen decarboxylase (357 aa).

Residues 30 to 34 (RQAGR), D79, Y154, S209, and H336 each bind substrate.

Belongs to the uroporphyrinogen decarboxylase family. In terms of assembly, homodimer.

The protein localises to the cytoplasm. It carries out the reaction uroporphyrinogen III + 4 H(+) = coproporphyrinogen III + 4 CO2. Its pathway is porphyrin-containing compound metabolism; protoporphyrin-IX biosynthesis; coproporphyrinogen-III from 5-aminolevulinate: step 4/4. Its function is as follows. Catalyzes the decarboxylation of four acetate groups of uroporphyrinogen-III to yield coproporphyrinogen-III. The sequence is that of Uroporphyrinogen decarboxylase from Mycobacterium leprae (strain Br4923).